Here is a 351-residue protein sequence, read N- to C-terminus: Transaldolase (351 aa).

K138 serves as the catalytic Schiff-base intermediate with substrate.

This sequence belongs to the transaldolase family. Type 2 subfamily.

The protein resides in the cytoplasm. It carries out the reaction D-sedoheptulose 7-phosphate + D-glyceraldehyde 3-phosphate = D-erythrose 4-phosphate + beta-D-fructose 6-phosphate. It participates in carbohydrate degradation; pentose phosphate pathway; D-glyceraldehyde 3-phosphate and beta-D-fructose 6-phosphate from D-ribose 5-phosphate and D-xylulose 5-phosphate (non-oxidative stage): step 2/3. In terms of biological role, transaldolase is important for the balance of metabolites in the pentose-phosphate pathway. The chain is Transaldolase from Neisseria gonorrhoeae (strain ATCC 700825 / FA 1090).